Reading from the N-terminus, the 482-residue chain is Membrane-bound lytic murein transglycosylase F (482 aa).

The signal sequence occupies residues 1 to 18 (MKGLFLRIITALALLFWA). The non-LT domain stretch occupies residues 19 to 267 (IDMVFPWQFL…NLKEKYLGHI (249 aa)). An LT domain region spans residues 268–482 (SQFDYVDTRS…NLEEIKENKD (215 aa)). E312 is a catalytic residue. Polar residues predominate over residues 457–470 (ENQTTNDNANNESA). The segment at 457–482 (ENQTTNDNANNESAVKNLEEIKENKD) is disordered. Positions 473–482 (NLEEIKENKD) are enriched in basic and acidic residues.

The protein in the N-terminal section; belongs to the bacterial solute-binding protein 3 family. This sequence in the C-terminal section; belongs to the transglycosylase Slt family.

It localises to the cell outer membrane. The catalysed reaction is Exolytic cleavage of the (1-&gt;4)-beta-glycosidic linkage between N-acetylmuramic acid (MurNAc) and N-acetylglucosamine (GlcNAc) residues in peptidoglycan, from either the reducing or the non-reducing ends of the peptidoglycan chains, with concomitant formation of a 1,6-anhydrobond in the MurNAc residue.. Murein-degrading enzyme that degrades murein glycan strands and insoluble, high-molecular weight murein sacculi, with the concomitant formation of a 1,6-anhydromuramoyl product. Lytic transglycosylases (LTs) play an integral role in the metabolism of the peptidoglycan (PG) sacculus. Their lytic action creates space within the PG sacculus to allow for its expansion as well as for the insertion of various structures such as secretion systems and flagella. In Haemophilus influenzae (strain 86-028NP), this protein is Membrane-bound lytic murein transglycosylase F.